An 89-amino-acid polypeptide reads, in one-letter code: Small ribosomal subunit protein uS15 (89 aa).

Belongs to the universal ribosomal protein uS15 family. As to quaternary structure, part of the 30S ribosomal subunit. Forms a bridge to the 50S subunit in the 70S ribosome, contacting the 23S rRNA.

Functionally, one of the primary rRNA binding proteins, it binds directly to 16S rRNA where it helps nucleate assembly of the platform of the 30S subunit by binding and bridging several RNA helices of the 16S rRNA. Its function is as follows. Forms an intersubunit bridge (bridge B4) with the 23S rRNA of the 50S subunit in the ribosome. The protein is Small ribosomal subunit protein uS15 of Thiobacillus denitrificans (strain ATCC 25259 / T1).